The primary structure comprises 120 residues: NAD(P)H-quinone oxidoreductase subunit 3 (120 aa).

The next 3 helical transmembrane spans lie at 6–26, 64–84, and 89–109; these read GYDA…LALV, MFAL…PWAV, and LGLL…VALA.

It belongs to the complex I subunit 3 family. As to quaternary structure, NDH-1 can be composed of about 15 different subunits; different subcomplexes with different compositions have been identified which probably have different functions.

It localises to the cellular thylakoid membrane. It catalyses the reaction a plastoquinone + NADH + (n+1) H(+)(in) = a plastoquinol + NAD(+) + n H(+)(out). The enzyme catalyses a plastoquinone + NADPH + (n+1) H(+)(in) = a plastoquinol + NADP(+) + n H(+)(out). In terms of biological role, NDH-1 shuttles electrons from an unknown electron donor, via FMN and iron-sulfur (Fe-S) centers, to quinones in the respiratory and/or the photosynthetic chain. The immediate electron acceptor for the enzyme in this species is believed to be plastoquinone. Couples the redox reaction to proton translocation, and thus conserves the redox energy in a proton gradient. Cyanobacterial NDH-1 also plays a role in inorganic carbon-concentration. This Synechococcus sp. (strain CC9605) protein is NAD(P)H-quinone oxidoreductase subunit 3.